A 354-amino-acid chain; its full sequence is Uroporphyrinogen decarboxylase (354 aa).

Substrate-binding positions include 27–31, aspartate 77, tyrosine 154, threonine 209, and histidine 327; that span reads RQAGR.

It belongs to the uroporphyrinogen decarboxylase family. Homodimer.

It localises to the cytoplasm. It catalyses the reaction uroporphyrinogen III + 4 H(+) = coproporphyrinogen III + 4 CO2. It functions in the pathway porphyrin-containing compound metabolism; protoporphyrin-IX biosynthesis; coproporphyrinogen-III from 5-aminolevulinate: step 4/4. Functionally, catalyzes the decarboxylation of four acetate groups of uroporphyrinogen-III to yield coproporphyrinogen-III. In Escherichia coli O81 (strain ED1a), this protein is Uroporphyrinogen decarboxylase.